Consider the following 118-residue polypeptide: Basic phospholipase A2 2 (118 aa).

Disulfide bonds link Cys11-Cys71, Cys27-Cys117, Cys29-Cys45, Cys44-Cys98, Cys51-Cys91, Cys60-Cys84, and Cys78-Cys89. Ca(2+) is bound by residues Tyr28, Gly30, and Gly32. His48 is an active-site residue. Position 49 (Asp49) interacts with Ca(2+). Residue Asp92 is part of the active site.

This sequence belongs to the phospholipase A2 family. Group I subfamily. D49 sub-subfamily. Ca(2+) serves as cofactor. As to expression, expressed by the venom gland.

The protein resides in the secreted. It carries out the reaction a 1,2-diacyl-sn-glycero-3-phosphocholine + H2O = a 1-acyl-sn-glycero-3-phosphocholine + a fatty acid + H(+). Functionally, snake venom phospholipase A2 (PLA2) that inhibits neuromuscular transmission by blocking acetylcholine release from the nerve termini. PLA2 catalyzes the calcium-dependent hydrolysis of the 2-acyl groups in 3-sn-phosphoglycerides. This Laticauda colubrina (Yellow-lipped sea krait) protein is Basic phospholipase A2 2.